A 349-amino-acid chain; its full sequence is Phosphoribosylformylglycinamidine cyclo-ligase (349 aa).

This sequence belongs to the AIR synthase family.

It localises to the cytoplasm. The catalysed reaction is 2-formamido-N(1)-(5-O-phospho-beta-D-ribosyl)acetamidine + ATP = 5-amino-1-(5-phospho-beta-D-ribosyl)imidazole + ADP + phosphate + H(+). The protein operates within purine metabolism; IMP biosynthesis via de novo pathway; 5-amino-1-(5-phospho-D-ribosyl)imidazole from N(2)-formyl-N(1)-(5-phospho-D-ribosyl)glycinamide: step 2/2. In Methanococcus maripaludis (strain C6 / ATCC BAA-1332), this protein is Phosphoribosylformylglycinamidine cyclo-ligase.